Here is a 368-residue protein sequence, read N- to C-terminus: 1-deoxy-D-xylulose 5-phosphate reductoisomerase (368 aa).

Positions 7, 8, 9, 10, 31, 32, 33, and 113 each coordinate NADPH. Residue lysine 114 participates in 1-deoxy-D-xylulose 5-phosphate binding. Glutamate 115 provides a ligand contact to NADPH. A Mn(2+)-binding site is contributed by aspartate 133. 1-deoxy-D-xylulose 5-phosphate-binding residues include serine 134, glutamate 135, serine 158, and histidine 181. Glutamate 135 serves as a coordination point for Mn(2+). Glycine 187 contacts NADPH. 1-deoxy-D-xylulose 5-phosphate contacts are provided by serine 194, asparagine 199, lysine 200, and glutamate 203. Glutamate 203 contributes to the Mn(2+) binding site.

This sequence belongs to the DXR family. It depends on Mg(2+) as a cofactor. Requires Mn(2+) as cofactor.

The enzyme catalyses 2-C-methyl-D-erythritol 4-phosphate + NADP(+) = 1-deoxy-D-xylulose 5-phosphate + NADPH + H(+). Its pathway is isoprenoid biosynthesis; isopentenyl diphosphate biosynthesis via DXP pathway; isopentenyl diphosphate from 1-deoxy-D-xylulose 5-phosphate: step 1/6. Its function is as follows. Catalyzes the NADPH-dependent rearrangement and reduction of 1-deoxy-D-xylulose-5-phosphate (DXP) to 2-C-methyl-D-erythritol 4-phosphate (MEP). In Helicobacter pylori (strain J99 / ATCC 700824) (Campylobacter pylori J99), this protein is 1-deoxy-D-xylulose 5-phosphate reductoisomerase.